Here is a 158-residue protein sequence, read N- to C-terminus: 6,7-dimethyl-8-ribityllumazine synthase (158 aa).

5-amino-6-(D-ribitylamino)uracil is bound by residues F23, 57–59 (AFE), and 81–83 (TVI). 86–87 (GT) lines the (2S)-2-hydroxy-3-oxobutyl phosphate pocket. H89 functions as the Proton donor in the catalytic mechanism. F114 is a binding site for 5-amino-6-(D-ribitylamino)uracil. Residue R128 coordinates (2S)-2-hydroxy-3-oxobutyl phosphate.

The protein belongs to the DMRL synthase family.

It catalyses the reaction (2S)-2-hydroxy-3-oxobutyl phosphate + 5-amino-6-(D-ribitylamino)uracil = 6,7-dimethyl-8-(1-D-ribityl)lumazine + phosphate + 2 H2O + H(+). It participates in cofactor biosynthesis; riboflavin biosynthesis; riboflavin from 2-hydroxy-3-oxobutyl phosphate and 5-amino-6-(D-ribitylamino)uracil: step 1/2. Functionally, catalyzes the formation of 6,7-dimethyl-8-ribityllumazine by condensation of 5-amino-6-(D-ribitylamino)uracil with 3,4-dihydroxy-2-butanone 4-phosphate. This is the penultimate step in the biosynthesis of riboflavin. This chain is 6,7-dimethyl-8-ribityllumazine synthase, found in Desulforudis audaxviator (strain MP104C).